We begin with the raw amino-acid sequence, 195 residues long: Imidazoleglycerol-phosphate dehydratase (195 aa).

Belongs to the imidazoleglycerol-phosphate dehydratase family.

It is found in the cytoplasm. The enzyme catalyses D-erythro-1-(imidazol-4-yl)glycerol 3-phosphate = 3-(imidazol-4-yl)-2-oxopropyl phosphate + H2O. Its pathway is amino-acid biosynthesis; L-histidine biosynthesis; L-histidine from 5-phospho-alpha-D-ribose 1-diphosphate: step 6/9. The sequence is that of Imidazoleglycerol-phosphate dehydratase from Hydrogenovibrio crunogenus (strain DSM 25203 / XCL-2) (Thiomicrospira crunogena).